The primary structure comprises 176 residues: 3-hydroxydecanoyl-[acyl-carrier-protein] dehydratase (176 aa).

H71 is an active-site residue.

The protein belongs to the thioester dehydratase family. FabA subfamily. In terms of assembly, homodimer.

The protein resides in the cytoplasm. It carries out the reaction a (3R)-hydroxyacyl-[ACP] = a (2E)-enoyl-[ACP] + H2O. The enzyme catalyses (3R)-hydroxydecanoyl-[ACP] = (2E)-decenoyl-[ACP] + H2O. The catalysed reaction is (2E)-decenoyl-[ACP] = (3Z)-decenoyl-[ACP]. The protein operates within lipid metabolism; fatty acid biosynthesis. In terms of biological role, necessary for the introduction of cis unsaturation into fatty acids. Catalyzes the dehydration of (3R)-3-hydroxydecanoyl-ACP to E-(2)-decenoyl-ACP and then its isomerization to Z-(3)-decenoyl-ACP. Can catalyze the dehydratase reaction for beta-hydroxyacyl-ACPs with saturated chain lengths up to 16:0, being most active on intermediate chain length. The chain is 3-hydroxydecanoyl-[acyl-carrier-protein] dehydratase from Rhodopseudomonas palustris (strain BisA53).